Consider the following 254-residue polypeptide: 3-deoxy-manno-octulosonate cytidylyltransferase (254 aa).

The protein belongs to the KdsB family.

The protein localises to the cytoplasm. The catalysed reaction is 3-deoxy-alpha-D-manno-oct-2-ulosonate + CTP = CMP-3-deoxy-beta-D-manno-octulosonate + diphosphate. It participates in nucleotide-sugar biosynthesis; CMP-3-deoxy-D-manno-octulosonate biosynthesis; CMP-3-deoxy-D-manno-octulosonate from 3-deoxy-D-manno-octulosonate and CTP: step 1/1. Its pathway is bacterial outer membrane biogenesis; lipopolysaccharide biosynthesis. Its function is as follows. Activates KDO (a required 8-carbon sugar) for incorporation into bacterial lipopolysaccharide in Gram-negative bacteria. The chain is 3-deoxy-manno-octulosonate cytidylyltransferase from Haemophilus influenzae (strain ATCC 51907 / DSM 11121 / KW20 / Rd).